A 406-amino-acid chain; its full sequence is 11-beta-hydroxysteroid dehydrogenase type 2 (406 aa).

82–111 provides a ligand contact to NAD(+); it reads TRAVLITGCDSGFGKETAKKLDAMGFTVLA. Position 219 (Ser-219) interacts with substrate. Tyr-232 acts as the Proton acceptor in catalysis. Residues 379 to 406 are disordered; sequence GQPGATPAPDTAQDNPNPNPDPSLVGAR.

Belongs to the short-chain dehydrogenases/reductases (SDR) family. In terms of assembly, interacts with ligand-free cytoplasmic NR3C2. Highly expressed in the kidney.

The protein resides in the microsome. The protein localises to the endoplasmic reticulum. It carries out the reaction an 11beta-hydroxysteroid + NAD(+) = an 11-oxosteroid + NADH + H(+). The enzyme catalyses corticosterone + NAD(+) = 11-dehydrocorticosterone + NADH + H(+). The catalysed reaction is cortisol + NAD(+) = cortisone + NADH + H(+). It catalyses the reaction 11beta,17beta-dihydroxyandrost-4-ene-3-one + NAD(+) = 17beta-hydroxyandrost-4-ene-3,11-dione + NADH + H(+). It carries out the reaction 11beta-hydroxyandrost-4-ene-3,17-dione + NAD(+) = androst-4-ene-3,11,17-trione + NADH + H(+). The protein operates within steroid metabolism. Inhibited by carbenoloxone. In terms of biological role, catalyzes the conversion of biologically active 11beta-hydroxyglucocorticoids (11beta-hydroxysteroid) such as corticosterone, to inactive 11-ketoglucocorticoids (11-oxosteroid) such as 11-dehydrocorticosterone, in the presence of NAD(+). Functions as a dehydrogenase (oxidase), thereby decreasing the concentration of active glucocorticoids, thus protecting the nonselective mineralocorticoid receptor from occupation by glucocorticoids. Plays an important role in maintaining glucocorticoids balance during preimplantation and protects the fetus from excessive maternal corticosterone exposure. Catalyzes the oxidation of 11beta-hydroxytestosterone (11beta,17beta-dihydroxyandrost-4-ene-3-one) to 11-ketotestosterone (17beta-hydroxyandrost-4-ene-3,11-dione), a major bioactive androgen. Catalyzes the conversion of 11beta-hydroxyandrostenedione (11beta-hydroxyandrost-4-ene-3,17-dione) to 11-ketoandrostenedione (androst-4-ene-3,11,17-trione), which can be further metabolized to 11-ketotestosterone. Converts 7-beta-25-dihydroxycholesterol to 7-oxo-25-hydroxycholesterol in vitro. 7-beta-25-dihydroxycholesterol (not 7-oxo-25-hydroxycholesterol) acts as a ligand for the G-protein-coupled receptor (GPCR) Epstein-Barr virus-induced gene 2 (EBI2) and may thereby regulate immune cell migration. May protect ovulating oocytes and fertilizing spermatozoa from the adverse effects of cortisol. This chain is 11-beta-hydroxysteroid dehydrogenase type 2 (HSD11B2), found in Oryctolagus cuniculus (Rabbit).